Consider the following 347-residue polypeptide: GMP reductase (347 aa).

108–131 is an NADP(+) binding site; the sequence is TDFIKLSEILAKSEDLNFICIDIA. Residues Gly181 and Gly183 each contribute to the K(+) site. The active-site Thioimidate intermediate is Cys186. 216–239 lines the NADP(+) pocket; sequence IIGDGGCSCAGDVAKAFGGGADFV.

This sequence belongs to the IMPDH/GMPR family. GuaC type 1 subfamily. In terms of assembly, homotetramer.

The enzyme catalyses IMP + NH4(+) + NADP(+) = GMP + NADPH + 2 H(+). Catalyzes the irreversible NADPH-dependent deamination of GMP to IMP. It functions in the conversion of nucleobase, nucleoside and nucleotide derivatives of G to A nucleotides, and in maintaining the intracellular balance of A and G nucleotides. The protein is GMP reductase of Shewanella pealeana (strain ATCC 700345 / ANG-SQ1).